A 165-amino-acid chain; its full sequence is UPF0254 protein MmarC5_0742 (165 aa).

Belongs to the UPF0254 family.

In Methanococcus maripaludis (strain C5 / ATCC BAA-1333), this protein is UPF0254 protein MmarC5_0742.